The chain runs to 139 residues: D-ribose pyranase (139 aa).

The Proton donor role is filled by His-20. Residues Asp-28, His-106, and 128-130 (FAN) each bind substrate.

This sequence belongs to the RbsD / FucU family. RbsD subfamily. Homodecamer.

The protein localises to the cytoplasm. It carries out the reaction beta-D-ribopyranose = beta-D-ribofuranose. It functions in the pathway carbohydrate metabolism; D-ribose degradation; D-ribose 5-phosphate from beta-D-ribopyranose: step 1/2. Catalyzes the interconversion of beta-pyran and beta-furan forms of D-ribose. The chain is D-ribose pyranase from Klebsiella pneumoniae (strain 342).